The sequence spans 207 residues: Calcipressin-like protein (207 aa).

The required for tax-6 interaction stretch occupies residues 176 to 181; the sequence is PAIIVH.

It belongs to the RCAN family. As to quaternary structure, interacts with tax-6 (via catalytic domain); the interaction is calcium-dependent. As to expression, expressed in lateral hypodermal cells, marginal cells of the pharynx, vulva epithelial cells, ventral and dorsal nerve cords and commissures and various neurons in the anterior and posterior regions. Expressed in male tail structures including the diagonal muscles, sensory rays and spicules. Expressed in PHC neurons and most tail neurons and support cells of the phasmid neurons. Also expressed in pharyngeal muscle, head neurons, excretory canal cells and hypodermal seam cells.

Functionally, inhibits tax-6/calcineurin A phosphatase activity and thereby negatively regulates calcineurin-mediated functions. Plays a role in modulating temperature-dependent calcium responses in AFD neurons and in addition, also negatively regulates thermotaxis in a tax-6-dependent manner in AFD neurons. In response to changes in intracellular calcium levels may also regulate nuclear translocation of transcriptional regulators such as crtc-1. May play a role in regulating body size. Plays a role in male tail tip morphogenesis. This Caenorhabditis elegans protein is Calcipressin-like protein.